Consider the following 455-residue polypeptide: MHIKISTDFAIQNLHCTTMIRPLLRLCGQRTAATPFVSFFRPPKKPLSGISFARHYSPTKKPPSEVPTPTPGNYLVPITGPPGDTPRDTDLLIKSLTHKSLLPENNLVRCTVFDSDGNVTVASGEFKRTELLNKHGLLPRDLRKLDTGVNSIVPTILVRDNSILINLLHIRALIKADKVLLFDVFGSTDSKTQSLFMYDLGHKLKKSNKTMGSLPYEMRALEAIFISVIAALDAEMKVHTTVINGILSELEQDIDREKLRHLLIQSKKLSAFLQKATLIRDVIDELLDTDEDLAGLYLTEKKAGHPRAIDDHSEVEMLLETYYKHCDEIVQTVGNLVSNIRNTEEIVNIILDANRNALMHLDLKFQIGALGLAGGTFIASLYGMNLKNFIEESYWGFLGVTGVASLLTVWIIAHFLKSLRQVQRVTMTSDKKKAMKKKDTVAEKRRNHLRNWLTK.

The N-terminal 56 residues, 1 to 56 (MHIKISTDFAIQNLHCTTMIRPLLRLCGQRTAATPFVSFFRPPKKPLSGISFARHY), are a transit peptide targeting the mitochondrion. Transmembrane regions (helical) follow at residues 365–385 (FQIGALGLAGGTFIASLYGMN) and 396–416 (GFLGVTGVASLLTVWIIAHFL). The YGMN signature appears at 382 to 385 (YGMN). The span at 433–444 (KAMKKKDTVAEK) shows a compositional bias: basic and acidic residues. A disordered region spans residues 433-455 (KAMKKKDTVAEKRRNHLRNWLTK).

It belongs to the CorA metal ion transporter (MIT) (TC 1.A.35) family. As to quaternary structure, forms homooligomers. Interacts with MRS2.

The protein resides in the mitochondrion inner membrane. Functionally, mitochondrial inner membrane magnesium transporter required for mitochondrial magnesium homeostasis. Modulates the conductance of the MRS2 channel. Involved in the splicing of mRNA group II introns in mitochondria by affecting mitochondrial magnesium concentrations, which are critical for group II intron splicing. This Yarrowia lipolytica (strain CLIB 122 / E 150) (Yeast) protein is Mitochondrial inner membrane magnesium transporter LPE10 (LPE10).